The chain runs to 309 residues: Tagatose-6-phosphate kinase (309 aa).

The protein belongs to the carbohydrate kinase PfkB family. LacC subfamily.

It carries out the reaction D-tagatofuranose 6-phosphate + ATP = D-tagatofuranose 1,6-bisphosphate + ADP + H(+). Its pathway is carbohydrate metabolism; D-tagatose 6-phosphate degradation; D-glyceraldehyde 3-phosphate and glycerone phosphate from D-tagatose 6-phosphate: step 1/2. In Streptococcus pyogenes serotype M4 (strain MGAS10750), this protein is Tagatose-6-phosphate kinase.